The sequence spans 38 residues: Photosystem II reaction center protein L (38 aa).

The chain crosses the membrane as a helical span at residues 17 to 37 (SLYWGLLLIFVLAVLFSNYFF).

This sequence belongs to the PsbL family. In terms of assembly, PSII is composed of 1 copy each of membrane proteins PsbA, PsbB, PsbC, PsbD, PsbE, PsbF, PsbH, PsbI, PsbJ, PsbK, PsbL, PsbM, PsbT, PsbX, PsbY, PsbZ, Psb30/Ycf12, at least 3 peripheral proteins of the oxygen-evolving complex and a large number of cofactors. It forms dimeric complexes.

The protein localises to the plastid. It localises to the chloroplast thylakoid membrane. In terms of biological role, one of the components of the core complex of photosystem II (PSII). PSII is a light-driven water:plastoquinone oxidoreductase that uses light energy to abstract electrons from H(2)O, generating O(2) and a proton gradient subsequently used for ATP formation. It consists of a core antenna complex that captures photons, and an electron transfer chain that converts photonic excitation into a charge separation. This subunit is found at the monomer-monomer interface and is required for correct PSII assembly and/or dimerization. The chain is Photosystem II reaction center protein L from Angiopteris evecta (Mule's foot fern).